The sequence spans 54 residues: Large ribosomal subunit protein bL33A (54 aa).

Belongs to the bacterial ribosomal protein bL33 family.

In Mycobacteroides abscessus (strain ATCC 19977 / DSM 44196 / CCUG 20993 / CIP 104536 / JCM 13569 / NCTC 13031 / TMC 1543 / L948) (Mycobacterium abscessus), this protein is Large ribosomal subunit protein bL33A.